We begin with the raw amino-acid sequence, 66 residues long: MNTKVVLIMLMITSVILVVEAETLFTANCLDRKDCKKHCKSKGCKEMKCEQIIKPTWRCLCIMCSK.

The signal sequence occupies residues 1–21 (MNTKVVLIMLMITSVILVVEA). 4 disulfide bridges follow: Cys-29-Cys-49, Cys-35-Cys-59, Cys-39-Cys-61, and Cys-44-Cys-64.

This sequence belongs to the short scorpion toxin superfamily. Potassium channel inhibitor family. Expressed by the venom gland.

It is found in the secreted. Blocks voltage-gated potassium channels. The chain is Potassium channel toxin alpha-KTx from Hoffmannihadrurus gertschi (Scorpion).